Reading from the N-terminus, the 272-residue chain is MQHHKATPESPIGIFDSGVGGLTVVRAIQAEMPAERIIYFGDTARVPYGTKSPATIRKYAHEDTAILMSHLPKIIIVACNTVSALALDVVEKTAGSIPVIGVLKAGADLAVQVTRNKHVGVIGTQATVSSNAYADAITLLDANIEVVSKACPLFVPLAEEGFTEHAATRLIASDYLAAFDGHDIDTLVLGCTHYPILRHVITETLHRDIRIIDSAEAVAGRTRKLLADAKLLSTEKHAPPPHLLVSDLPQKFSMLYKLFMESDLPDVELVEV.

Substrate is bound by residues 16–17 (DS) and 48–49 (YG). C79 acts as the Proton donor/acceptor in catalysis. A substrate-binding site is contributed by 80-81 (NT). The active-site Proton donor/acceptor is the C191. 192–193 (TH) is a binding site for substrate.

It belongs to the aspartate/glutamate racemases family.

It catalyses the reaction L-glutamate = D-glutamate. It participates in cell wall biogenesis; peptidoglycan biosynthesis. In terms of biological role, provides the (R)-glutamate required for cell wall biosynthesis. The sequence is that of Glutamate racemase from Chlorobium phaeobacteroides (strain DSM 266 / SMG 266 / 2430).